A 430-amino-acid polypeptide reads, in one-letter code: Tektin-2 (430 aa).

Coiled-coil stretches lie at residues 80-162 and 225-382; these read KCLT…FEQL and NKDR…CKAN.

It belongs to the tektin family. As to quaternary structure, microtubule inner protein component of sperm flagellar doublet microtubules. May interact with CCDC172. Post-translationally, tyrosine phosphorylated. In terms of processing, ubiquitinated, leading to its degradation. Deubiquitinated by USP16, promoting its stability. Expressed at high levels in testis, trachea and fetal lung, and at lower levels in ovary, pituitary, adult lung, fetal brain and fetal kidney.

The protein localises to the cytoplasm. Its subcellular location is the cytoskeleton. It localises to the cilium axoneme. It is found in the flagellum axoneme. The protein resides in the microtubule organizing center. Functionally, microtubule inner protein (MIP) part of the dynein-decorated doublet microtubules (DMTs) in cilia and flagellar axoneme. Plays a key role in the assembly or attachment of the inner dynein arm to microtubules in sperm flagella and tracheal cilia. Forms filamentous polymers in the walls of ciliary and flagellar microtubules. This Homo sapiens (Human) protein is Tektin-2.